We begin with the raw amino-acid sequence, 205 residues long: MAAARPSLGRVLPGSSILFLCDMQEKFRHNIAYFPQIVSVAARMLRVARLLEVPVMLTEQYPQGLGPTVPELGAEGLRPLAKTCFSMVPALRQELDSRPQLRSVLLCGIEAQACILNTTLDLLDQGLQVHVVVDACSSRSQVDRLVALARMRQSGAFLSTSEGLILQLVGDAAHPQFKEIQKLIKEPAPDSGLLGLFQGQNSLLH.

Phosphoserine occurs at positions 7 and 202.

It belongs to the isochorismatase family. In terms of assembly, interacts with CDKN2A.

The protein localises to the cytoplasm. Its subcellular location is the nucleus. This Pongo abelii (Sumatran orangutan) protein is Isochorismatase domain-containing protein 2 (ISOC2).